We begin with the raw amino-acid sequence, 671 residues long: Probable potassium transport system protein Kup 2 (671 aa).

12 consecutive transmembrane segments (helical) span residues 12–32 (FAGL…SPLY), 56–76 (ISLI…MIAL), 99–119 (WLVI…TLTP), 139–159 (IPVP…VILF), 172–192 (AFGP…IANL), 218–238 (VGIL…ALYS), 251–271 (SWPY…AWIL), 296–316 (LFAI…LITG), 345–365 (IYIP…VFLF), 374–394 (AYGL…FEYL), 400–420 (PLYL…MFLI), and 429–449 (GGYV…VWFY).

Belongs to the HAK/KUP transporter (TC 2.A.72) family.

It is found in the cell membrane. It catalyses the reaction K(+)(in) + H(+)(in) = K(+)(out) + H(+)(out). Its function is as follows. Transport of potassium into the cell. Likely operates as a K(+):H(+) symporter. The polypeptide is Probable potassium transport system protein Kup 2 (Lactobacillus acidophilus (strain ATCC 700396 / NCK56 / N2 / NCFM)).